Here is a 529-residue protein sequence, read N- to C-terminus: Protein PNS1 (529 aa).

Residues 1–58 (MSQQYSYGGGGGAGYPPPQMQPPNSYAQANYQGQPQGAQNQYYNGQQPHHNAPQQYYG) form a disordered region. Residues 1–84 (MSQQYSYGGG…LQPKPKFRDP (84 aa)) are Cytoplasmic-facing. A compositionally biased stretch (low complexity) spans 22 to 48 (PPNSYAQANYQGQPQGAQNQYYNGQQP). The helical transmembrane segment at 85-105 (IFLVLFLLVFAGFIALSVICL) threads the bilayer. The Extracellular portion of the chain corresponds to 106 to 132 (RSYSNADVNVSIGRANVAGSTLNGHTA). A glycan (N-linked (GlcNAc...) asparagine) is linked at asparagine 114. The helical transmembrane segment at 133–153 (IMFMICCAVALVLSFVYILLV) threads the bilayer. At 154 to 158 (RTFPK) the chain is on the cytoplasmic side. The helical transmembrane segment at 159-179 (IILEATLLLTTLSNVAFCVYL) threads the bilayer. At 180–184 (WVRGN) the chain is on the extracellular side. Residues 185-205 (TAAAIIFTIFAVLSVIAYFFM) traverse the membrane as a helical segment. Over 206–230 (RKRIPLAKLILVTVIRTAEQYKSVY) the chain is Cytoplasmic. The helical transmembrane segment at 231-251 (VVALGGLIVETAFSAWTSWVV) threads the bilayer. At 252–271 (VAAYQRFEPSGQAAGSSSSN) the chain is on the extracellular side. N-linked (GlcNAc...) asparagine glycosylation occurs at asparagine 271. The chain crosses the membrane as a helical span at residues 272 to 292 (ASIIGIMVFIVFAYYWISEVI). Residues 293-294 (KN) lie on the Cytoplasmic side of the membrane. A helical membrane pass occupies residues 295 to 315 (IAFTTVAGIFGVAYYNANKVA). Over 316-325 (NAAWGAFRRS) the chain is Extracellular. The chain crosses the membrane as a helical span at residues 326–346 (MTYSLGSICFGSLIVAILDLL). The Cytoplasmic portion of the chain corresponds to 347–362 (RALFNILQSQAASDGD). Residues 363-383 (MTGQILACVAGCCVSCIQGLV) traverse the membrane as a helical segment. Residues 384-427 (DYFNRYAYINIALYGNGYITAAKETWALLKDRGIDAIINDSLVN) lie on the Extracellular side of the membrane. The N-linked (GlcNAc...) asparagine glycan is linked to asparagine 422. The helical transmembrane segment at 428–448 (IVFNCGAFIIGLLTALFAFIY) threads the bilayer. Residues 449 to 464 (EQLTNPRYLQNDAGYY) are Cytoplasmic-facing. A helical transmembrane segment spans residues 465-485 (SIVLLVAFGLGFNIALSVGAG). The Extracellular portion of the chain corresponds to 486–529 (SIASGVSTYFVALAEDPYILQGKNPELFEMIRQQYPQVVQGVNH).

This sequence belongs to the CTL (choline transporter-like) family.

Its subcellular location is the cell membrane. In terms of biological role, probably involved in transport through the plasma membrane. The sequence is that of Protein PNS1 (PNS1) from Mycosarcoma maydis (Corn smut fungus).